A 483-amino-acid chain; its full sequence is Glutamyl-tRNA(Gln) amidotransferase subunit A (483 aa).

Catalysis depends on charge relay system residues Lys76 and Ser151. Catalysis depends on Ser175, which acts as the Acyl-ester intermediate.

The protein belongs to the amidase family. GatA subfamily. As to quaternary structure, heterotrimer of A, B and C subunits.

The enzyme catalyses L-glutamyl-tRNA(Gln) + L-glutamine + ATP + H2O = L-glutaminyl-tRNA(Gln) + L-glutamate + ADP + phosphate + H(+). Its function is as follows. Allows the formation of correctly charged Gln-tRNA(Gln) through the transamidation of misacylated Glu-tRNA(Gln) in organisms which lack glutaminyl-tRNA synthetase. The reaction takes place in the presence of glutamine and ATP through an activated gamma-phospho-Glu-tRNA(Gln). This is Glutamyl-tRNA(Gln) amidotransferase subunit A from Pseudomonas fluorescens (strain ATCC BAA-477 / NRRL B-23932 / Pf-5).